The following is a 281-amino-acid chain: Ribosomal protein L11 methyltransferase (281 aa).

4 residues coordinate S-adenosyl-L-methionine: threonine 133, glycine 154, aspartate 175, and asparagine 216.

The protein belongs to the methyltransferase superfamily. PrmA family.

It localises to the cytoplasm. The enzyme catalyses L-lysyl-[protein] + 3 S-adenosyl-L-methionine = N(6),N(6),N(6)-trimethyl-L-lysyl-[protein] + 3 S-adenosyl-L-homocysteine + 3 H(+). In terms of biological role, methylates ribosomal protein L11. The protein is Ribosomal protein L11 methyltransferase of Campylobacter jejuni subsp. jejuni serotype O:6 (strain 81116 / NCTC 11828).